The primary structure comprises 346 residues: Uracil-DNA glycosylase (346 aa).

The tract at residues 1 to 105 is disordered; it reads MSGKITDFFE…KLKNEEKSEE (105 aa). Over residues 20–29 the composition is skewed to basic and acidic residues; that stretch reads AENKDNDKEL. Residues 30-42 are compositionally biased toward low complexity; it reads TSTTTTTTTTSTT. Basic residues predominate over residues 43–64; that stretch reads SKKKVAAAPKKKAAVASKKRKH. The segment covering 67–86 has biased composition (acidic residues); that stretch reads SDEETDKEEQQNDDDDDGEE. Asp186 serves as the catalytic Proton acceptor.

Belongs to the uracil-DNA glycosylase (UDG) superfamily. UNG family.

It is found in the mitochondrion. Its subcellular location is the nucleus. It carries out the reaction Hydrolyzes single-stranded DNA or mismatched double-stranded DNA and polynucleotides, releasing free uracil.. Functionally, excises uracil residues from the DNA which can arise as a result of misincorporation of dUMP residues by DNA polymerase or due to deamination of cytosine. This is Uracil-DNA glycosylase (uglA) from Dictyostelium discoideum (Social amoeba).